We begin with the raw amino-acid sequence, 399 residues long: Beta-1,6-galactosyltransferase GALT31A (399 aa).

The Cytoplasmic portion of the chain corresponds to 1-12; that stretch reads MGMGRYQKSATS. The helical; Signal-anchor for type II membrane protein transmembrane segment at 13–35 threads the bilayer; the sequence is GVSARWVFVLCISSFLLGVLVVN. The Lumenal segment spans residues 36-399; the sequence is RLLASFETVD…GDGAIWHSSF (364 aa).

Belongs to the glycosyltransferase 31 family. As to quaternary structure, interacts with GALT29A. The cofactor is Mn(2+).

It localises to the golgi apparatus membrane. It functions in the pathway protein modification; protein glycosylation. Beta-galactosyltransferase involved in elongation of beta-1,6-linked galactan side chains on arabinogalactan proteins. Required for the progression of embryogenesis beyond the globular stage. Beta-galactosyltransferase involved in the biosynthesis of type II arabinogalactan. Transfers galactose from UDP-galactose to a mixture of various oligosaccharides derived from arabinogalactan proteins. Forms a complex with GALT29A that can work cooperatively to enhance the activities of adding galactose residues at O6 positions to beta-1,6-linked galactan and beta-1,3-linked galactan. In Arabidopsis thaliana (Mouse-ear cress), this protein is Beta-1,6-galactosyltransferase GALT31A.